The sequence spans 322 residues: Ribose-phosphate pyrophosphokinase 1 (322 aa).

ATP-binding positions include 39 to 41 (DGE) and 98 to 99 (RQ). Mg(2+) is bound by residues H132 and D173. K196 is a catalytic residue. Residues R198, D224, and 228 to 232 (DTAGT) contribute to the D-ribose 5-phosphate site.

Belongs to the ribose-phosphate pyrophosphokinase family. Class I subfamily. In terms of assembly, homohexamer. Requires Mg(2+) as cofactor.

The protein localises to the cytoplasm. It catalyses the reaction D-ribose 5-phosphate + ATP = 5-phospho-alpha-D-ribose 1-diphosphate + AMP + H(+). Its pathway is metabolic intermediate biosynthesis; 5-phospho-alpha-D-ribose 1-diphosphate biosynthesis; 5-phospho-alpha-D-ribose 1-diphosphate from D-ribose 5-phosphate (route I): step 1/1. Involved in the biosynthesis of the central metabolite phospho-alpha-D-ribosyl-1-pyrophosphate (PRPP) via the transfer of pyrophosphoryl group from ATP to 1-hydroxyl of ribose-5-phosphate (Rib-5-P). This chain is Ribose-phosphate pyrophosphokinase 1, found in Streptococcus mutans serotype c (strain ATCC 700610 / UA159).